The following is a 204-amino-acid chain: Small ribosomal subunit protein uS4 (204 aa).

One can recognise an S4 RNA-binding domain in the interval 92 to 156; the sequence is RRLDALVLRS…SKVPFQVARE (65 aa).

This sequence belongs to the universal ribosomal protein uS4 family. Part of the 30S ribosomal subunit. Contacts protein S5. The interaction surface between S4 and S5 is involved in control of translational fidelity.

Functionally, one of the primary rRNA binding proteins, it binds directly to 16S rRNA where it nucleates assembly of the body of the 30S subunit. With S5 and S12 plays an important role in translational accuracy. The sequence is that of Small ribosomal subunit protein uS4 from Streptomyces griseus subsp. griseus (strain JCM 4626 / CBS 651.72 / NBRC 13350 / KCC S-0626 / ISP 5235).